The following is a 150-amino-acid chain: Ribonuclease K6 (150 aa).

The first 23 residues, 1–23 (MVLCFPLLLLLLVLWGPVCPLHA), serve as a signal peptide directing secretion. The Proton acceptor role is filled by His38. 4 cysteine pairs are disulfide-bonded: Cys46/Cys104, Cys60/Cys114, Cys78/Cys129, and Cys85/Cys92. N-linked (GlcNAc...) asparagine glycosylation occurs at Asn55. Substrate-binding positions include 61 to 65 (KHQNT) and Lys86. Residue Asn100 is glycosylated (N-linked (GlcNAc...) asparagine). Arg105 lines the substrate pocket. Residue His145 is the Proton donor of the active site.

The protein belongs to the pancreatic ribonuclease family. As to quaternary structure, interacts (via N-terminus) with bacterial lipopolysaccharide (LPS).

It localises to the secreted. The protein resides in the lysosome. It is found in the cytoplasmic granule. In terms of biological role, ribonuclease which shows a preference for the pyrimidines uridine and cytosine. Has potent antibacterial activity against a range of Gram-positive and Gram-negative bacteria, including P.aeruginosa, A.baumanii, M.luteus, S.aureus, E.faecalis, E.faecium, S.saprophyticus and E.coli. Causes loss of bacterial membrane integrity, and also promotes agglutination of Gram-negative bacteria. Probably contributes to urinary tract sterility. Bactericidal activity is independent of RNase activity. This is Ribonuclease K6 (RNASE6) from Pongo pygmaeus (Bornean orangutan).